The sequence spans 561 residues: Eukaryotic translation initiation factor 3 subunit D-1 (561 aa).

The segment at 98-164 is disordered; it reads VQKPPHQRGR…RGPPPKMRES (67 aa). The span at 100–121 shows a compositional bias: basic residues; that stretch reads KPPHQRGRFRNMRNSRSGRGRN. The residue at position 128 (T128) is a Phosphothreonine. The segment at 289 to 303 is RNA gate; that stretch reads EFDLLTVNETSVEPP.

It belongs to the eIF-3 subunit D family. As to quaternary structure, component of the eukaryotic translation initiation factor 3 (eIF-3) complex. The eIF-3 complex interacts with pix.

It localises to the cytoplasm. MRNA cap-binding component of the eukaryotic translation initiation factor 3 (eIF-3) complex, which is involved in protein synthesis of a specialized repertoire of mRNAs and, together with other initiation factors, stimulates binding of mRNA and methionyl-tRNAi to the 40S ribosome. The eIF-3 complex specifically targets and initiates translation of a subset of mRNAs involved in cell proliferation. In the eIF-3 complex, eif3d specifically recognizes and binds the 7-methylguanosine cap of a subset of mRNAs. This is Eukaryotic translation initiation factor 3 subunit D-1 from Drosophila ananassae (Fruit fly).